Consider the following 269-residue polypeptide: 3-methyl-2-oxobutanoate hydroxymethyltransferase (269 aa).

Residues aspartate 50 and aspartate 89 each contribute to the Mg(2+) site. Residues 50 to 51, aspartate 89, and lysine 118 each bind 3-methyl-2-oxobutanoate; that span reads DS. Residue glutamate 120 participates in Mg(2+) binding. The active-site Proton acceptor is the glutamate 187.

Belongs to the PanB family. As to quaternary structure, homodecamer; pentamer of dimers. Mg(2+) is required as a cofactor.

The protein resides in the cytoplasm. The catalysed reaction is 3-methyl-2-oxobutanoate + (6R)-5,10-methylene-5,6,7,8-tetrahydrofolate + H2O = 2-dehydropantoate + (6S)-5,6,7,8-tetrahydrofolate. The protein operates within cofactor biosynthesis; (R)-pantothenate biosynthesis; (R)-pantoate from 3-methyl-2-oxobutanoate: step 1/2. Functionally, catalyzes the reversible reaction in which hydroxymethyl group from 5,10-methylenetetrahydrofolate is transferred onto alpha-ketoisovalerate to form ketopantoate. The protein is 3-methyl-2-oxobutanoate hydroxymethyltransferase of Nitrosomonas europaea (strain ATCC 19718 / CIP 103999 / KCTC 2705 / NBRC 14298).